A 174-amino-acid polypeptide reads, in one-letter code: CEN-like protein 1 (174 aa).

The protein belongs to the phosphatidylethanolamine-binding protein family. In terms of tissue distribution, expressed in vegetative axillary meristems but not in the main shoot meristem.

The protein resides in the cytoplasm. May form complexes with phosphorylated ligands by interfering with kinases and their effectors. This chain is CEN-like protein 1 (CET1), found in Nicotiana tabacum (Common tobacco).